The chain runs to 67 residues: Ceratotoxin-C (67 aa).

The first 23 residues, M1 to A23, serve as a signal peptide directing secretion. A propeptide spanning residues E24–R35 is cleaved from the precursor.

In terms of assembly, homomer of four to six subunits.

The protein resides in the secreted. Its function is as follows. Female-specific peptides with potent activity against Gram-positive and Gram-negative bacteria. They have as well hemolytic activity. The polypeptide is Ceratotoxin-C (CTXC1) (Ceratitis capitata (Mediterranean fruit fly)).